A 98-amino-acid polypeptide reads, in one-letter code: Gibberellin-regulated protein 1 (98 aa).

An N-terminal signal peptide occupies residues 1-23; sequence MAISKALIASLLISLLVLQLVQA.

It belongs to the GASA family. In terms of processing, six disulfide bonds may be present. As to expression, expressed in flower buds, style, stamen filaments, vasculature of sepals, flower abscission zone and green siliques. Lower levels seen in the root phloem, cotyledons and vasculature of rosette leaves.

The protein resides in the secreted. Gibberellin-regulated protein that may function in hormonal controlled steps of development such as seed germination, flowering and seed maturation. This Arabidopsis thaliana (Mouse-ear cress) protein is Gibberellin-regulated protein 1 (GASA1).